The sequence spans 428 residues: Maltoporin 1 (428 aa).

The N-terminal stretch at 1–25 (MTMKVKLLTTSVALALSMTAFSSNA) is a signal peptide.

This sequence belongs to the porin LamB (TC 1.B.3) family. As to quaternary structure, homotrimer formed of three 18-stranded antiparallel beta-barrels, containing three independent channels.

Its subcellular location is the cell outer membrane. It carries out the reaction beta-maltose(in) = beta-maltose(out). Functionally, involved in the transport of maltose and maltodextrins. This chain is Maltoporin 1, found in Aeromonas salmonicida (strain A449).